The chain runs to 282 residues: Acetylglutamate kinase (282 aa).

Residues 62-63 (GG), R84, and N178 each bind substrate.

It belongs to the acetylglutamate kinase family. ArgB subfamily.

The protein resides in the cytoplasm. The enzyme catalyses N-acetyl-L-glutamate + ATP = N-acetyl-L-glutamyl 5-phosphate + ADP. It participates in amino-acid biosynthesis; L-arginine biosynthesis; N(2)-acetyl-L-ornithine from L-glutamate: step 2/4. Its function is as follows. Catalyzes the ATP-dependent phosphorylation of N-acetyl-L-glutamate. This is Acetylglutamate kinase from Thermotoga petrophila (strain ATCC BAA-488 / DSM 13995 / JCM 10881 / RKU-1).